We begin with the raw amino-acid sequence, 335 residues long: Methionine import ATP-binding protein MetN (335 aa).

An ABC transporter domain is found at 2–241 (IQFQRLHKSY…PQHPTTRRFV (240 aa)). Position 38-45 (38-45 (GHSGAGKS)) interacts with ATP.

The protein belongs to the ABC transporter superfamily. Methionine importer (TC 3.A.1.24) family. As to quaternary structure, the complex is composed of two ATP-binding proteins (MetN), two transmembrane proteins (MetI) and a solute-binding protein (MetQ).

It localises to the cell inner membrane. It catalyses the reaction L-methionine(out) + ATP + H2O = L-methionine(in) + ADP + phosphate + H(+). The enzyme catalyses D-methionine(out) + ATP + H2O = D-methionine(in) + ADP + phosphate + H(+). Part of the ABC transporter complex MetNIQ involved in methionine import. Responsible for energy coupling to the transport system. This is Methionine import ATP-binding protein MetN from Xanthomonas campestris pv. campestris (strain 8004).